We begin with the raw amino-acid sequence, 392 residues long: UPF0229 protein CPE1333 (392 aa).

The disordered stretch occupies residues 75–100; sequence VTTGTGEERRGDRISSDKRKAISNNK. Basic and acidic residues predominate over residues 80 to 94; it reads GEERRGDRISSDKRK.

Belongs to the UPF0229 family.

This Clostridium perfringens (strain 13 / Type A) protein is UPF0229 protein CPE1333.